Reading from the N-terminus, the 296-residue chain is L-fucono-1,5-lactonase (296 aa).

Belongs to the metallo-dependent hydrolases superfamily. As to quaternary structure, monomer. Does not require a divalent metal for activity. The purified enzyme contains Zn(2+), but the addition of chelators does not diminish the catalytic activity of the enzyme, indicating that it does not require a divalent cation for substrate turnover. is required as a cofactor.

It catalyses the reaction L-fucono-1,5-lactone + H2O = L-fuconate + H(+). The catalysed reaction is L-fucono-1,4-lactone + H2O = L-fuconate + H(+). The enzyme catalyses D-arabinono-1,4-lactone + H2O = D-arabinonate + H(+). It carries out the reaction L-xylono-1,4-lactone + H2O = L-xylonate + H(+). It catalyses the reaction L-galactono-1,4-lactone + H2O = L-galactonate + H(+). The protein operates within carbohydrate degradation; L-fucose degradation. L-fucono-1,5-lactonase involved in an L-fucose degradation pathway. Catalyzes the hydrolysis of L-fucono-1,5-lactone to L-fuconate. L-fucono-1,5-lactone is the best substrate, but the enzyme can also hydrolyze L-fucono-1,4-lactone, L-galactono-1,4-lactone D-arabinono-1,4-lactone and L-xylono-1,4-lactone. This is L-fucono-1,5-lactonase from Burkholderia multivorans (strain ATCC 17616 / 249).